The following is a 668-amino-acid chain: Spindle assembly abnormal protein 6 homolog (668 aa).

A PISA domain is found at 39-91 (VHKKELVVRLSDDTDPFFLYNLTLGEEDFQSLKNQQGLLVEFSAFPQRFIDLL). Residues 182-482 (LGVTQQALAE…NVIAWLNKQL (301 aa)) adopt a coiled-coil conformation. Residues 623–668 (GSVPVKGQRNGSSAGTVPVRPALPKSGSSPILSAYFPGQQSRLPAS) form a disordered region.

In terms of assembly, nine homodimers form a cartwheel structure with an internal diameter of 23 nM and radial spokes connecting to the microtubule triplets.

The protein localises to the cytoplasm. Its subcellular location is the cytoskeleton. It localises to the microtubule organizing center. It is found in the centrosome. Central scaffolding component of the centrioles ensuring their 9-fold symmetry. Required for centrosome biogenesis and duplication: required both for mother-centriole-dependent centriole duplication and deuterosome-dependent centriole amplification in multiciliated cells. This is Spindle assembly abnormal protein 6 homolog (sas6) from Xenopus laevis (African clawed frog).